The following is a 420-amino-acid chain: Xyloglucan O-acetyltransferase 4 (420 aa).

Residues 1 to 30 (MTMHEKMKLPSCSCSAFKCGKKDRWLNMER) lie on the Cytoplasmic side of the membrane. Residues 31 to 51 (PIPFLLIGLTTILSVFILYTL) traverse the membrane as a helical; Signal-anchor for type II membrane protein segment. The Lumenal portion of the chain corresponds to 52–420 (NPLKFVIEHN…LLLAVLRRLD (369 aa)). Intrachain disulfides connect C78-C128, C99-C164, C108-C400, and C323-C396. Residue N96 is glycosylated (N-linked (GlcNAc...) asparagine). The short motif at 151-153 (GDS) is the GDS motif element. S153 acts as the Nucleophile in catalysis. Residues N192, N212, N270, and N324 are each glycosylated (N-linked (GlcNAc...) asparagine). Catalysis depends on D395, which acts as the Proton donor. Positions 395–398 (DCVH) match the DXXH motif motif. The Proton acceptor role is filled by H398.

This sequence belongs to the PC-esterase family. TBL subfamily.

The protein resides in the golgi apparatus membrane. In terms of biological role, xyloglucan acetyltransferase that catalyzes the acetylation of fucosylated Gal residues on xyloglucan side chains. Predominantly catalyze 6-O-monoacetylation of Gal residues in the Fuc-Gal-Xyl trisaccharide side chains of xyloglucan oligomers. The polypeptide is Xyloglucan O-acetyltransferase 4 (Populus trichocarpa (Western balsam poplar)).